The following is a 207-amino-acid chain: Guanylate kinase (207 aa).

The Guanylate kinase-like domain occupies 4 to 184 (NMYYAISAPS…TLNKIKTIII (181 aa)). Position 11 to 18 (11 to 18 (APSGTGKS)) interacts with ATP.

The protein belongs to the guanylate kinase family.

The protein resides in the cytoplasm. It catalyses the reaction GMP + ATP = GDP + ADP. In terms of biological role, essential for recycling GMP and indirectly, cGMP. The protein is Guanylate kinase of Wigglesworthia glossinidia brevipalpis.